The chain runs to 120 residues: uncharacterized protein (120 aa).

The region spanning 4 to 120 (QIGTVAVYVE…EDGNVFLLKE (117 aa)) is the VOC domain.

This is an uncharacterized protein from Bacillus subtilis (strain 168).